The primary structure comprises 485 residues: Glycogen synthase (485 aa).

K15 provides a ligand contact to ADP-alpha-D-glucose.

The protein belongs to the glycosyltransferase 1 family. Bacterial/plant glycogen synthase subfamily.

It catalyses the reaction [(1-&gt;4)-alpha-D-glucosyl](n) + ADP-alpha-D-glucose = [(1-&gt;4)-alpha-D-glucosyl](n+1) + ADP + H(+). It functions in the pathway glycan biosynthesis; glycogen biosynthesis. Its function is as follows. Synthesizes alpha-1,4-glucan chains using ADP-glucose. This is Glycogen synthase from Geobacillus thermodenitrificans (strain NG80-2).